A 162-amino-acid chain; its full sequence is NADH-quinone oxidoreductase subunit I (162 aa).

2 4Fe-4S ferredoxin-type domains span residues 52–82 and 93–122; these read LRRY…IEAG and TRYD…EGPN. Cys62, Cys65, Cys68, Cys72, Cys102, Cys105, Cys108, and Cys112 together coordinate [4Fe-4S] cluster.

This sequence belongs to the complex I 23 kDa subunit family. In terms of assembly, NDH-1 is composed of 14 different subunits. Subunits NuoA, H, J, K, L, M, N constitute the membrane sector of the complex. Requires [4Fe-4S] cluster as cofactor.

The protein resides in the cell inner membrane. It catalyses the reaction a quinone + NADH + 5 H(+)(in) = a quinol + NAD(+) + 4 H(+)(out). Functionally, NDH-1 shuttles electrons from NADH, via FMN and iron-sulfur (Fe-S) centers, to quinones in the respiratory chain. The immediate electron acceptor for the enzyme in this species is believed to be ubiquinone. Couples the redox reaction to proton translocation (for every two electrons transferred, four hydrogen ions are translocated across the cytoplasmic membrane), and thus conserves the redox energy in a proton gradient. The protein is NADH-quinone oxidoreductase subunit I of Methylobacterium radiotolerans (strain ATCC 27329 / DSM 1819 / JCM 2831 / NBRC 15690 / NCIMB 10815 / 0-1).